We begin with the raw amino-acid sequence, 426 residues long: Histidine--tRNA ligase (426 aa).

It belongs to the class-II aminoacyl-tRNA synthetase family. In terms of assembly, homodimer.

It is found in the cytoplasm. It catalyses the reaction tRNA(His) + L-histidine + ATP = L-histidyl-tRNA(His) + AMP + diphosphate + H(+). This is Histidine--tRNA ligase from Chlorobium phaeovibrioides (strain DSM 265 / 1930) (Prosthecochloris vibrioformis (strain DSM 265)).